Reading from the N-terminus, the 193-residue chain is Holliday junction branch migration complex subunit RuvA (193 aa).

The interval 1–64 is domain I; that stretch reads MIGRIAGVLL…EDAHLLYGFL (64 aa). The tract at residues 65–139 is domain II; sequence TPQERSTFRE…GKLGADLGAM (75 aa). The segment at 139-143 is flexible linker; it reads MAGAA. The segment at 144-193 is domain III; the sequence is SQSDHASDILNALLALGYSEKEGLAAIKNVPAGTGVSEGIKLALKALSKA.

This sequence belongs to the RuvA family. Homotetramer. Forms an RuvA(8)-RuvB(12)-Holliday junction (HJ) complex. HJ DNA is sandwiched between 2 RuvA tetramers; dsDNA enters through RuvA and exits via RuvB. An RuvB hexamer assembles on each DNA strand where it exits the tetramer. Each RuvB hexamer is contacted by two RuvA subunits (via domain III) on 2 adjacent RuvB subunits; this complex drives branch migration. In the full resolvosome a probable DNA-RuvA(4)-RuvB(12)-RuvC(2) complex forms which resolves the HJ.

The protein localises to the cytoplasm. The RuvA-RuvB-RuvC complex processes Holliday junction (HJ) DNA during genetic recombination and DNA repair, while the RuvA-RuvB complex plays an important role in the rescue of blocked DNA replication forks via replication fork reversal (RFR). RuvA specifically binds to HJ cruciform DNA, conferring on it an open structure. The RuvB hexamer acts as an ATP-dependent pump, pulling dsDNA into and through the RuvAB complex. HJ branch migration allows RuvC to scan DNA until it finds its consensus sequence, where it cleaves and resolves the cruciform DNA. The chain is Holliday junction branch migration complex subunit RuvA from Paraburkholderia phymatum (strain DSM 17167 / CIP 108236 / LMG 21445 / STM815) (Burkholderia phymatum).